The following is a 68-amino-acid chain: Galectin-10 (68 aa).

The 68-residue stretch at 1–68 (EPYLQVDFHT…LSISVLPDKY (68 aa)) folds into the Galectin domain.

In terms of assembly, interacts with CEL.

The protein resides in the cytoplasm. The protein localises to the cytosol. It localises to the cytoplasmic granule. Its function is as follows. Regulates immune responses through the recognition of cell-surface glycans. Essential for the anergy and suppressive function of CD25-positive regulatory T-cells (Treg). The chain is Galectin-10 (CLC) from Pongo pygmaeus (Bornean orangutan).